The primary structure comprises 181 residues: uncharacterized protein (181 aa).

This is an uncharacterized protein from Rickettsia prowazekii (strain Madrid E).